We begin with the raw amino-acid sequence, 193 residues long: ATP synthase subunit b (193 aa).

A helical transmembrane segment spans residues 24-44 (PLAELIVGLLAFGLLVGFFFW).

The protein belongs to the ATPase B chain family. As to quaternary structure, F-type ATPases have 2 components, F(1) - the catalytic core - and F(0) - the membrane proton channel. F(1) has five subunits: alpha(3), beta(3), gamma(1), delta(1), epsilon(1). F(0) has three main subunits: a(1), b(2) and c(10-14). The alpha and beta chains form an alternating ring which encloses part of the gamma chain. F(1) is attached to F(0) by a central stalk formed by the gamma and epsilon chains, while a peripheral stalk is formed by the delta and b chains.

It localises to the cell membrane. F(1)F(0) ATP synthase produces ATP from ADP in the presence of a proton or sodium gradient. F-type ATPases consist of two structural domains, F(1) containing the extramembraneous catalytic core and F(0) containing the membrane proton channel, linked together by a central stalk and a peripheral stalk. During catalysis, ATP synthesis in the catalytic domain of F(1) is coupled via a rotary mechanism of the central stalk subunits to proton translocation. Functionally, component of the F(0) channel, it forms part of the peripheral stalk, linking F(1) to F(0). This is ATP synthase subunit b from Parafrankia sp. (strain EAN1pec).